Reading from the N-terminus, the 69-residue chain is MSDEEVVDPKATLEVSCKPKCVRQLKEYQACTKRVEGDESGHKHCTGQYFDYWHCIDKCVAAKLFDHLK.

2 cysteine pairs are disulfide-bonded: cysteine 17–cysteine 59 and cysteine 31–cysteine 45.

The protein belongs to the UQCRH/QCR6 family. Component of the ubiquinol-cytochrome c oxidoreductase (cytochrome b-c1 complex, complex III, CIII), a multisubunit enzyme composed of 3 respiratory subunits cytochrome b, cytochrome c1 and Rieske protein, 2 core protein subunits, and additional low-molecular weight protein subunits. The complex exists as an obligatory dimer and forms supercomplexes (SCs) in the inner mitochondrial membrane with cytochrome c oxidase (complex IV, CIV).

It is found in the mitochondrion inner membrane. Its function is as follows. Component of the ubiquinol-cytochrome c oxidoreductase, a multisubunit transmembrane complex that is part of the mitochondrial electron transport chain which drives oxidative phosphorylation. The respiratory chain contains 3 multisubunit complexes succinate dehydrogenase (complex II, CII), ubiquinol-cytochrome c oxidoreductase (cytochrome b-c1 complex, complex III, CIII) and cytochrome c oxidase (complex IV, CIV), that cooperate to transfer electrons derived from NADH and succinate to molecular oxygen, creating an electrochemical gradient over the inner membrane that drives transmembrane transport and the ATP synthase. The cytochrome b-c1 complex catalyzes electron transfer from ubiquinol to cytochrome c, linking this redox reaction to translocation of protons across the mitochondrial inner membrane, with protons being carried across the membrane as hydrogens on the quinol. In the process called Q cycle, 2 protons are consumed from the matrix, 4 protons are released into the intermembrane space and 2 electrons are passed to cytochrome c. This chain is Cytochrome b-c1 complex subunit 6, found in Solanum tuberosum (Potato).